Here is a 443-residue protein sequence, read N- to C-terminus: Thymidine phosphorylase (443 aa).

The protein belongs to the thymidine/pyrimidine-nucleoside phosphorylase family. As to quaternary structure, homodimer.

The enzyme catalyses thymidine + phosphate = 2-deoxy-alpha-D-ribose 1-phosphate + thymine. It functions in the pathway pyrimidine metabolism; dTMP biosynthesis via salvage pathway; dTMP from thymine: step 1/2. In terms of biological role, the enzymes which catalyze the reversible phosphorolysis of pyrimidine nucleosides are involved in the degradation of these compounds and in their utilization as carbon and energy sources, or in the rescue of pyrimidine bases for nucleotide synthesis. The sequence is that of Thymidine phosphorylase from Photobacterium profundum (strain SS9).